The following is an 879-amino-acid chain: DNA mismatch repair protein MutS (879 aa).

629-636 provides a ligand contact to ATP; the sequence is GPNMGGKS.

Belongs to the DNA mismatch repair MutS family.

This protein is involved in the repair of mismatches in DNA. It is possible that it carries out the mismatch recognition step. This protein has a weak ATPase activity. The polypeptide is DNA mismatch repair protein MutS (Erythrobacter litoralis (strain HTCC2594)).